Consider the following 466-residue polypeptide: tRNA-2-methylthio-N(6)-dimethylallyladenosine synthase (466 aa).

The 117-residue stretch at 21 to 137 (GSYWITTFGC…LEDLLNQVDN (117 aa)) folds into the MTTase N-terminal domain. [4Fe-4S] cluster is bound by residues cysteine 30, cysteine 66, cysteine 100, cysteine 172, cysteine 176, and cysteine 179. A Radical SAM core domain is found at 158-395 (RDSNICAWVN…NLLVEQTAKD (238 aa)). In terms of domain architecture, TRAM spans 398–466 (TRYHNQIVEV…AFSLTGSPIQ (69 aa)).

The protein belongs to the methylthiotransferase family. MiaB subfamily. In terms of assembly, monomer. [4Fe-4S] cluster serves as cofactor.

The protein localises to the cytoplasm. It carries out the reaction N(6)-dimethylallyladenosine(37) in tRNA + (sulfur carrier)-SH + AH2 + 2 S-adenosyl-L-methionine = 2-methylsulfanyl-N(6)-dimethylallyladenosine(37) in tRNA + (sulfur carrier)-H + 5'-deoxyadenosine + L-methionine + A + S-adenosyl-L-homocysteine + 2 H(+). In terms of biological role, catalyzes the methylthiolation of N6-(dimethylallyl)adenosine (i(6)A), leading to the formation of 2-methylthio-N6-(dimethylallyl)adenosine (ms(2)i(6)A) at position 37 in tRNAs that read codons beginning with uridine. In Prochlorococcus marinus (strain SARG / CCMP1375 / SS120), this protein is tRNA-2-methylthio-N(6)-dimethylallyladenosine synthase.